Consider the following 120-residue polypeptide: Small ribosomal subunit protein bS16 (120 aa).

Positions 84–120 (KRESRNNPQQGQPKKKAQERAAAAAAAAEKAASEAAA) are disordered. A compositionally biased stretch (low complexity) spans 103 to 120 (RAAAAAAAAEKAASEAAA).

Belongs to the bacterial ribosomal protein bS16 family.

The sequence is that of Small ribosomal subunit protein bS16 from Beijerinckia indica subsp. indica (strain ATCC 9039 / DSM 1715 / NCIMB 8712).